Consider the following 94-residue polypeptide: Gibberellin-regulated protein 11 (94 aa).

Positions 1–23 (MAVFRVLLASLLISLLVLDFVHA) are cleaved as a signal peptide.

This sequence belongs to the GASA family. In terms of processing, six disulfide bonds may be present.

Its subcellular location is the secreted. In terms of biological role, gibberellin-regulated protein that may function in hormonal controlled steps of development such as seed germination, flowering and seed maturation. The chain is Gibberellin-regulated protein 11 (GASA11) from Arabidopsis thaliana (Mouse-ear cress).